The following is a 184-amino-acid chain: Ras-related protein Rap-1b (184 aa).

Glycine 10–alanine 18 provides a ligand contact to GTP. The segment at glutamine 25–methionine 67 is interaction with KRIT1. Residues tyrosine 32–tyrosine 40 carry the Effector region motif. GTP is bound by residues aspartate 57–threonine 61, asparagine 116–aspartate 119, and serine 147–lysine 149. Serine 179 is modified (phosphoserine; by PKA). Cysteine 181 bears the Cysteine methyl ester mark. Cysteine 181 is lipidated: S-geranylgeranyl cysteine. Positions glutamine 182–leucine 184 are cleaved as a propeptide — removed in mature form.

As to quaternary structure, heterodimer with RAP1GAP. Interacts with EPAC2. Interacts with SGSM1. Interacts with SGSM2. Interacts with SGSM3. Interacts with KRIT1. Interacts with RAP1GDS1.

It localises to the cell membrane. It is found in the cytoplasm. The protein localises to the cytosol. Its subcellular location is the cell junction. It carries out the reaction GTP + H2O = GDP + phosphate + H(+). Activated by guanine nucleotide-exchange factor (GEF) EPAC2 in a cAMP-dependent manner. Functionally, GTP-binding protein that possesses intrinsic GTPase activity. Contributes to the polarizing activity of KRIT1 and CDH5 in the establishment and maintenance of correct endothelial cell polarity and vascular lumen. Required for the localization of phosphorylated PRKCZ, PARD3 and TIAM1 to the cell junction. Plays a role in the establishment of basal endothelial barrier function. The sequence is that of Ras-related protein Rap-1b (RAP1B) from Bos taurus (Bovine).